The sequence spans 840 residues: Leucine--tRNA ligase (840 aa).

The 'HIGH' region signature appears at 44–55 (PYPSANGLHVGH). The 'KMSKS' region motif lies at 617 to 621 (KMSKS). Residue K620 coordinates ATP.

It belongs to the class-I aminoacyl-tRNA synthetase family.

It is found in the cytoplasm. It catalyses the reaction tRNA(Leu) + L-leucine + ATP = L-leucyl-tRNA(Leu) + AMP + diphosphate. The sequence is that of Leucine--tRNA ligase from Borrelia garinii subsp. bavariensis (strain ATCC BAA-2496 / DSM 23469 / PBi) (Borreliella bavariensis).